Consider the following 274-residue polypeptide: Dermonecrotic toxin SdSicTox-betaIIB1bxii (274 aa).

Residue His-5 is part of the active site. The Mg(2+) site is built by Glu-25 and Asp-27. His-41 acts as the Nucleophile in catalysis. 2 disulfides stabilise this stretch: Cys-45–Cys-51 and Cys-47–Cys-190. Asp-85 provides a ligand contact to Mg(2+).

This sequence belongs to the arthropod phospholipase D family. Class II subfamily. Requires Mg(2+) as cofactor. In terms of tissue distribution, expressed by the venom gland.

It localises to the secreted. It catalyses the reaction an N-(acyl)-sphingosylphosphocholine = an N-(acyl)-sphingosyl-1,3-cyclic phosphate + choline. It carries out the reaction an N-(acyl)-sphingosylphosphoethanolamine = an N-(acyl)-sphingosyl-1,3-cyclic phosphate + ethanolamine. The enzyme catalyses a 1-acyl-sn-glycero-3-phosphocholine = a 1-acyl-sn-glycero-2,3-cyclic phosphate + choline. The catalysed reaction is a 1-acyl-sn-glycero-3-phosphoethanolamine = a 1-acyl-sn-glycero-2,3-cyclic phosphate + ethanolamine. Functionally, dermonecrotic toxins cleave the phosphodiester linkage between the phosphate and headgroup of certain phospholipids (sphingolipid and lysolipid substrates), forming an alcohol (often choline) and a cyclic phosphate. This toxin acts on sphingomyelin (SM). It may also act on ceramide phosphoethanolamine (CPE), lysophosphatidylcholine (LPC) and lysophosphatidylethanolamine (LPE), but not on lysophosphatidylserine (LPS), and lysophosphatidylglycerol (LPG). It acts by transphosphatidylation, releasing exclusively cyclic phosphate products as second products. Induces dermonecrosis, hemolysis, increased vascular permeability, edema, inflammatory response, and platelet aggregation. This is Dermonecrotic toxin SdSicTox-betaIIB1bxii from Sicarius cf. damarensis (strain GJB-2008) (Six-eyed sand spider).